The sequence spans 158 residues: 2-C-methyl-D-erythritol 2,4-cyclodiphosphate synthase (158 aa).

A divalent metal cation-binding residues include Asp-9 and His-11. 4-CDP-2-C-methyl-D-erythritol 2-phosphate contacts are provided by residues 9–11 and 35–36; these read DVH and HS. His-43 provides a ligand contact to a divalent metal cation. Residues 57–59, 62–66, 133–136, Phe-140, and Arg-143 each bind 4-CDP-2-C-methyl-D-erythritol 2-phosphate; these read DIG, FPDTD, and TTTE.

It belongs to the IspF family. Homotrimer. Requires a divalent metal cation as cofactor.

It carries out the reaction 4-CDP-2-C-methyl-D-erythritol 2-phosphate = 2-C-methyl-D-erythritol 2,4-cyclic diphosphate + CMP. The protein operates within isoprenoid biosynthesis; isopentenyl diphosphate biosynthesis via DXP pathway; isopentenyl diphosphate from 1-deoxy-D-xylulose 5-phosphate: step 4/6. In terms of biological role, involved in the biosynthesis of isopentenyl diphosphate (IPP) and dimethylallyl diphosphate (DMAPP), two major building blocks of isoprenoid compounds. Catalyzes the conversion of 4-diphosphocytidyl-2-C-methyl-D-erythritol 2-phosphate (CDP-ME2P) to 2-C-methyl-D-erythritol 2,4-cyclodiphosphate (ME-CPP) with a corresponding release of cytidine 5-monophosphate (CMP). The chain is 2-C-methyl-D-erythritol 2,4-cyclodiphosphate synthase from Geobacillus kaustophilus (strain HTA426).